We begin with the raw amino-acid sequence, 132 residues long: Subtelomeric hrmA-associated cluster protein AFUB_079000 (132 aa).

In terms of biological role, part of the subtelomeric hrmA-associated cluster (HAC) containing genes that alter the hyphal surface (such as reduced total chitin or increased beta-glucan exposure) and perturb inter-hyphal interactions within the developing biofilms, resulting in a loss of vertically aligned polarized growing filaments. Consequently, this hypoxia-typic morphotype (called H-MORPH) with altered biofilm architecture leads to increased hypoxia fitness, increased host inflammation, rapid disease progression, and mortality in a murine model of invasive aspergillosis. The protein is Subtelomeric hrmA-associated cluster protein AFUB_079000 of Aspergillus fumigatus (strain CBS 144.89 / FGSC A1163 / CEA10) (Neosartorya fumigata).